A 216-amino-acid chain; its full sequence is Ornithine decarboxylase antizyme 1 (216 aa).

The protein belongs to the ODC antizyme family. As to quaternary structure, interacts with ODC1 and thereby sterically blocks ODC homodimerization.

Ornithine decarboxylase (ODC) antizyme protein that negatively regulates ODC activity and intracellular polyamine biosynthesis and uptake in response to increased intracellular polyamine levels. Binds to ODC monomers, inhibiting the assembly of the functional ODC homodimer, and targets the monomers for ubiquitin-independent proteolytic destruction by the 26S proteasome. This is Ornithine decarboxylase antizyme 1 (oaz1) from Xenopus laevis (African clawed frog).